The following is a 243-amino-acid chain: Pyridoxine 5'-phosphate synthase (243 aa).

A 3-amino-2-oxopropyl phosphate-binding site is contributed by asparagine 9. 1-deoxy-D-xylulose 5-phosphate is bound at residue 11–12 (DH). Arginine 20 is a 3-amino-2-oxopropyl phosphate binding site. The active-site Proton acceptor is the histidine 45. 1-deoxy-D-xylulose 5-phosphate-binding residues include arginine 47 and histidine 52. The active-site Proton acceptor is glutamate 72. Threonine 102 contacts 1-deoxy-D-xylulose 5-phosphate. Histidine 193 (proton donor) is an active-site residue. Residues glycine 194 and 215 to 216 (GH) each bind 3-amino-2-oxopropyl phosphate.

Belongs to the PNP synthase family. In terms of assembly, homooctamer; tetramer of dimers.

The protein localises to the cytoplasm. It catalyses the reaction 3-amino-2-oxopropyl phosphate + 1-deoxy-D-xylulose 5-phosphate = pyridoxine 5'-phosphate + phosphate + 2 H2O + H(+). The protein operates within cofactor biosynthesis; pyridoxine 5'-phosphate biosynthesis; pyridoxine 5'-phosphate from D-erythrose 4-phosphate: step 5/5. Functionally, catalyzes the complicated ring closure reaction between the two acyclic compounds 1-deoxy-D-xylulose-5-phosphate (DXP) and 3-amino-2-oxopropyl phosphate (1-amino-acetone-3-phosphate or AAP) to form pyridoxine 5'-phosphate (PNP) and inorganic phosphate. The sequence is that of Pyridoxine 5'-phosphate synthase from Escherichia coli O157:H7.